A 254-amino-acid chain; its full sequence is 5'-nucleotidase SurE (254 aa).

A divalent metal cation-binding residues include aspartate 8, aspartate 9, serine 38, and asparagine 91.

The protein belongs to the SurE nucleotidase family. The cofactor is a divalent metal cation.

Its subcellular location is the cytoplasm. It catalyses the reaction a ribonucleoside 5'-phosphate + H2O = a ribonucleoside + phosphate. In terms of biological role, nucleotidase that shows phosphatase activity on nucleoside 5'-monophosphates. The polypeptide is 5'-nucleotidase SurE (Anaeromyxobacter sp. (strain K)).